The primary structure comprises 113 residues: Dolichyl-diphosphooligosaccharide--protein glycosyltransferase subunit DAD1 (113 aa).

Residues 1 to 30 (MGSSAFEVLTFFLKDYKANTPQKLKIIDAY) lie on the Cytoplasmic side of the membrane. Residues 31-51 (LLYILLTGINQFLYCCLVGTF) traverse the membrane as a helical segment. Position 52 (proline 52) is a topological domain, lumenal. The chain crosses the membrane as a helical span at residues 53–73 (FNSFLSGFISCVASFVLGVCL). The Cytoplasmic portion of the chain corresponds to 74 to 92 (RLQVNPQNSSNFCGIPPER). The chain crosses the membrane as a helical span at residues 93-113 (AFADFIFAHVVLHLVVMNFIG).

It belongs to the DAD/OST2 family. As to quaternary structure, component of the oligosaccharyltransferase (OST) complex. As to expression, widely expressed. Greatest expression seen in the epidermis, intermediate expression in the fat body and midgut and mild expression observed in the silk gland.

It is found in the endoplasmic reticulum membrane. It functions in the pathway protein modification; protein glycosylation. Functionally, subunit of the oligosaccharyl transferase (OST) complex that catalyzes the initial transfer of a defined glycan (Glc(3)Man(9)GlcNAc(2) in eukaryotes) from the lipid carrier dolichol-pyrophosphate to an asparagine residue within an Asn-X-Ser/Thr consensus motif in nascent polypeptide chains, the first step in protein N-glycosylation. N-glycosylation occurs cotranslationally and the complex associates with the Sec61 complex at the channel-forming translocon complex that mediates protein translocation across the endoplasmic reticulum (ER). All subunits are required for a maximal enzyme activity. The polypeptide is Dolichyl-diphosphooligosaccharide--protein glycosyltransferase subunit DAD1 (Araneus ventricosus (Orbweaver spider)).